Reading from the N-terminus, the 354-residue chain is UDP-3-O-acylglucosamine N-acyltransferase (354 aa).

Histidine 257 (proton acceptor) is an active-site residue. The tract at residues 335–354 is disordered; it reads AQQVSKSKLRGRNPGGKQND.

Belongs to the transferase hexapeptide repeat family. LpxD subfamily. Homotrimer.

It carries out the reaction a UDP-3-O-[(3R)-3-hydroxyacyl]-alpha-D-glucosamine + a (3R)-hydroxyacyl-[ACP] = a UDP-2-N,3-O-bis[(3R)-3-hydroxyacyl]-alpha-D-glucosamine + holo-[ACP] + H(+). Its pathway is bacterial outer membrane biogenesis; LPS lipid A biosynthesis. Functionally, catalyzes the N-acylation of UDP-3-O-acylglucosamine using 3-hydroxyacyl-ACP as the acyl donor. Is involved in the biosynthesis of lipid A, a phosphorylated glycolipid that anchors the lipopolysaccharide to the outer membrane of the cell. This Rhizobium etli (strain ATCC 51251 / DSM 11541 / JCM 21823 / NBRC 15573 / CFN 42) protein is UDP-3-O-acylglucosamine N-acyltransferase.